Reading from the N-terminus, the 462-residue chain is Fumarate hydratase class II (462 aa).

Substrate-binding positions include 97–99 (SGT), 127–130 (HPND), 137–139 (SSN), and threonine 185. Catalysis depends on histidine 186, which acts as the Proton donor/acceptor. The active site involves serine 316. Substrate contacts are provided by residues serine 317 and 322-324 (KVN).

It belongs to the class-II fumarase/aspartase family. Fumarase subfamily. As to quaternary structure, homotetramer.

Its subcellular location is the cytoplasm. It carries out the reaction (S)-malate = fumarate + H2O. It participates in carbohydrate metabolism; tricarboxylic acid cycle; (S)-malate from fumarate: step 1/1. Functionally, involved in the TCA cycle. Catalyzes the stereospecific interconversion of fumarate to L-malate. The chain is Fumarate hydratase class II from Bacillus subtilis (strain 168).